The primary structure comprises 352 residues: C-C chemokine receptor type 5 (352 aa).

Residues 1–30 (MDYQVSSPTYDIDYDTSEPCQKINVKQIAA) are Extracellular-facing. Tyrosine 3 is subject to Sulfotyrosine. 2 O-linked (GalNAc...) serine glycosylation sites follow: serine 6 and serine 7. Sulfotyrosine occurs at positions 10 and 14. 2 disulfide bridges follow: cysteine 20–cysteine 269 and cysteine 101–cysteine 178. Residues 31–58 (RLLPPLYSLVFIFGFVGNMLVILVLINC) traverse the membrane as a helical segment. Topologically, residues 59–68 (KRLKSMTDIY) are cytoplasmic. Residues 69–89 (LLNLAISDLFFLLTVPFWAHY) traverse the membrane as a helical segment. Topologically, residues 90–102 (AAAQWDFGNTMCQ) are extracellular. The helical transmembrane segment at 103-124 (LLTGLYFIGFFSGIFFIILLTI) threads the bilayer. The Cytoplasmic portion of the chain corresponds to 125 to 141 (DRYLAIVHAVFALKART). A helical transmembrane segment spans residues 142–166 (VTFGVVTSVITWVVAVFASLPGIIF). Residues 167-198 (TRSQKEGLHYTCSSHFPYSQYQFWKNFQTLKI) are Extracellular-facing. Residues 199–218 (VILGLVLPLLVMVICYSGIL) form a helical membrane-spanning segment. Residues 219–235 (KTLLRCRNEKKRHRAVR) lie on the Cytoplasmic side of the membrane. A helical membrane pass occupies residues 236–260 (LIFTIMIVYFLFWAPYNIVLLLNTF). Over 261-277 (QEFFGLNNCSSSNRLDQ) the chain is Extracellular. Residues 278–301 (AMQVTETLGMTHCCINPIIYAFVG) traverse the membrane as a helical segment. Topologically, residues 302–352 (EKFRNYLLVFFQKHIAKHFCKCCSIFQQEAPERASSVYTRSTGEQEISVGL) are cytoplasmic. Residues cysteine 321, cysteine 323, and cysteine 324 are each lipidated (S-palmitoyl cysteine). Phosphoserine; by BARK1 occurs at positions 336, 337, 342, and 349.

It belongs to the G-protein coupled receptor 1 family. Interacts with PRAF2. Efficient ligand binding to CCL3/MIP-1alpha and CCL4/MIP-1beta requires sulfation, O-glycosylation and sialic acid modifications. Glycosylation on Ser-6 is required for efficient binding of CCL4. Interacts with GRK2. Interacts with ARRB1 and ARRB2. Interacts with CNIH4. Interacts with S100A4; this interaction stimulates T-lymphocyte chemotaxis. In terms of processing, sulfated on at least 2 of the N-terminal tyrosines. Sulfation is required for efficient binding of the chemokines, CCL3 and CCL4. Palmitoylation in the C-terminal is important for cell surface expression. Post-translationally, phosphorylation on serine residues in the C-terminal is stimulated by binding CC chemokines especially by APO-RANTES. In terms of processing, O-glycosylated, but not N-glycosylated. Ser-6 appears to be the major site even if Ser-7 may be also O-glycosylated. Also sialylated glycans present which contribute to chemokine binding. Thr-16 and Ser-17 may also be glycosylated and, if so, with small moieties such as a T-antigen.

It is found in the cell membrane. Functionally, receptor for a number of inflammatory CC-chemokines including CCL3/MIP-1-alpha, CCL4/MIP-1-beta and RANTES and subsequently transduces a signal by increasing the intracellular calcium ion level. May play a role in the control of granulocytic lineage proliferation or differentiation. Participates in T-lymphocyte migration to the infection site by acting as a chemotactic receptor. The sequence is that of C-C chemokine receptor type 5 (CCR5) from Nomascus leucogenys (Northern white-cheeked gibbon).